The sequence spans 466 residues: Zinc finger protein ZIC 3 (466 aa).

Positions 65–80 (DLSSGQSSAFTPQGSG) are enriched in polar residues. Positions 65 to 103 (DLSSGQSSAFTPQGSGYANALGHHHHHHHHHHASQVPTY) are disordered. Residues 86 to 97 (GHHHHHHHHHHA) show a composition bias toward basic residues. K247 participates in a covalent cross-link: Glycyl lysine isopeptide (Lys-Gly) (interchain with G-Cter in SUMO2). A C2H2-type 1; atypical zinc finger spans residues 250–285 (LSCKWIEEAQLSRPKKSCDRTFSTMHELVTHVTMEH). The C2H2-type 2; atypical zinc finger occupies 294–321 (HVCYWEECPREGKSFKAKYKLVNHIRVH). 2 short sequence motifs (nuclear localization signal) span residues 296-321 (CYWE…IRVH) and 329-351 (CPFP…KRTH). C2H2-type zinc fingers lie at residues 327-351 (FPCP…KRTH), 357-381 (FKCE…MHVH), and 387-409 (YICK…MKVH). Positions 403–466 (RKHMKVHESQ…LPPNFNEWYV (64 aa)) are disordered. The span at 411–427 (SQGSDSSPAASSGYESS) shows a compositional bias: low complexity. Over residues 434–454 (SANSKDTTKTPSAVQTSTSHN) the composition is skewed to polar residues.

The protein belongs to the GLI C2H2-type zinc-finger protein family. Interacts with KPNA1 and KPNA6. Interacts (via C2H2-type domains 3, 4 and 5) with GLI3; the interaction enhances its transcriptional activity. Interacts (via the C2H2-type domains 3, 4 and 5) with MDFIC (via the C2H2-type domains 3, 4 and 5); the interaction reduces its transcriptional activity. In terms of tissue distribution, CNS. A high level expression is seen in the cerebellum.

The protein resides in the nucleus. It is found in the cytoplasm. In terms of biological role, acts as a transcriptional activator. Required in the earliest stages in both axial midline development and left-right (LR) asymmetry specification. Binds to the minimal GLI-consensus sequence 5'-GGGTGGTC-3'. The protein is Zinc finger protein ZIC 3 (Zic3) of Mus musculus (Mouse).